The primary structure comprises 119 residues: Small polypeptide DEVIL 24 (119 aa).

Positions 83–114 are required for DVL/RTFL small polypeptide activity; it reads SFTSKCTSLMKQQHARLCIIRLCATMLLRSYT. Residues 96 to 113 traverse the membrane as a helical segment; sequence HARLCIIRLCATMLLRSY.

The protein belongs to the DVL/RTFL small polypeptides family.

Its subcellular location is the cell membrane. Functionally, small polypeptide acting as a regulatory molecule which coordinates cellular responses required for differentiation, growth and development, probably by restricting polar cell proliferation in lateral organs and coordinating socket cell recruitment and differentiation at trichome sites. In Arabidopsis thaliana (Mouse-ear cress), this protein is Small polypeptide DEVIL 24.